The sequence spans 106 residues: Small ribosomal subunit protein mS33 (106 aa).

Ser2 is modified (N-acetylserine). The interval 81–106 (EQRRLKKLRGKGKPRKGEGKRATKKK) is disordered. The segment covering 84-94 (RLKKLRGKGKP) has biased composition (basic residues). Basic and acidic residues predominate over residues 95–106 (RKGEGKRATKKK).

The protein belongs to the mitochondrion-specific ribosomal protein mS33 family. Component of the mitochondrial ribosome small subunit (28S) which comprises a 12S rRNA and about 30 distinct proteins.

The protein resides in the mitochondrion. The protein is Small ribosomal subunit protein mS33 (Mrps33) of Mus musculus (Mouse).